Consider the following 196-residue polypeptide: Pyridoxal 5'-phosphate synthase subunit PdxT (196 aa).

47-49 (GES) serves as a coordination point for L-glutamine. Catalysis depends on Cys-79, which acts as the Nucleophile. L-glutamine contacts are provided by residues Arg-106 and 134 to 135 (IR). Active-site charge relay system residues include His-170 and Glu-172.

The protein belongs to the glutaminase PdxT/SNO family. As to quaternary structure, in the presence of PdxS, forms a dodecamer of heterodimers. Only shows activity in the heterodimer.

The enzyme catalyses aldehydo-D-ribose 5-phosphate + D-glyceraldehyde 3-phosphate + L-glutamine = pyridoxal 5'-phosphate + L-glutamate + phosphate + 3 H2O + H(+). It catalyses the reaction L-glutamine + H2O = L-glutamate + NH4(+). It participates in cofactor biosynthesis; pyridoxal 5'-phosphate biosynthesis. Catalyzes the hydrolysis of glutamine to glutamate and ammonia as part of the biosynthesis of pyridoxal 5'-phosphate. The resulting ammonia molecule is channeled to the active site of PdxS. The sequence is that of Pyridoxal 5'-phosphate synthase subunit PdxT from Bacillus anthracis (strain A0248).